Consider the following 146-residue polypeptide: Cytochrome c oxidase subunit 5A, mitochondrial (146 aa).

The N-terminal 37 residues, 1–37, are a transit peptide targeting the mitochondrion; it reads MLAAALRRCTAAAAARGLLHPVSAPSPAAAVCSIRCY. Positions 2–16 match the SIFI-degron motif; the sequence is LAAALRRCTAAAAAR. Residues lysine 83 and lysine 109 each carry the N6-acetyllysine modification. At threonine 137 the chain carries Phosphothreonine.

As to quaternary structure, component of the cytochrome c oxidase (complex IV, CIV), a multisubunit enzyme composed of 14 subunits. The complex is composed of a catalytic core of 3 subunits MT-CO1, MT-CO2 and MT-CO3, encoded in the mitochondrial DNA, and 11 supernumerary subunits COX4I, COX5A, COX5B, COX6A, COX6B, COX6C, COX7A, COX7B, COX7C, COX8 and NDUFA4, which are encoded in the nuclear genome. The complex exists as a monomer or a dimer and forms supercomplexes (SCs) in the inner mitochondrial membrane with NADH-ubiquinone oxidoreductase (complex I, CI) and ubiquinol-cytochrome c oxidoreductase (cytochrome b-c1 complex, complex III, CIII), resulting in different assemblies (supercomplex SCI(1)III(2)IV(1) and megacomplex MCI(2)III(2)IV(2)). Interacts with AFG1L. Interacts with RAB5IF. In terms of processing, in response to mitochondrial stress, the precursor protein is ubiquitinated by the SIFI complex in the cytoplasm before mitochondrial import, leading to its degradation. Within the SIFI complex, UBR4 initiates ubiquitin chain that are further elongated or branched by KCMF1. Expressed in the head of epididymal sperm but not in testicular sperm (at protein level).

It localises to the mitochondrion inner membrane. The protein operates within energy metabolism; oxidative phosphorylation. Component of the cytochrome c oxidase, the last enzyme in the mitochondrial electron transport chain which drives oxidative phosphorylation. The respiratory chain contains 3 multisubunit complexes succinate dehydrogenase (complex II, CII), ubiquinol-cytochrome c oxidoreductase (cytochrome b-c1 complex, complex III, CIII) and cytochrome c oxidase (complex IV, CIV), that cooperate to transfer electrons derived from NADH and succinate to molecular oxygen, creating an electrochemical gradient over the inner membrane that drives transmembrane transport and the ATP synthase. Cytochrome c oxidase is the component of the respiratory chain that catalyzes the reduction of oxygen to water. Electrons originating from reduced cytochrome c in the intermembrane space (IMS) are transferred via the dinuclear copper A center (CU(A)) of subunit 2 and heme A of subunit 1 to the active site in subunit 1, a binuclear center (BNC) formed by heme A3 and copper B (CU(B)). The BNC reduces molecular oxygen to 2 water molecules using 4 electrons from cytochrome c in the IMS and 4 protons from the mitochondrial matrix. The protein is Cytochrome c oxidase subunit 5A, mitochondrial (Cox5a) of Rattus norvegicus (Rat).